The sequence spans 261 residues: Cobalt transport protein CbiM (261 aa).

Positions 1-33 are cleaved as a signal peptide; it reads MLRRVLASKRASLILMGMLSFYIIVSASAPAYA. The next 7 membrane-spanning stretches (helical) occupy residues 41-61, 76-96, 108-128, 140-160, 172-192, 197-217, and 220-240; these read LPAG…LLGV, LLLA…LPSV, LGSV…VLLF, TLGA…YWIY, IAIF…TSVQ, FPAP…IFAI, and IPLA…LQSY.

The protein belongs to the CbiM family. As to quaternary structure, forms an energy-coupling factor (ECF) transporter complex composed of an ATP-binding protein (A component, CbiO), a transmembrane protein (T component, CbiQ) and 2 possible substrate-capture proteins (S components, CbiM and CbiN) of unknown stoichimetry.

It is found in the cell inner membrane. Its pathway is cofactor biosynthesis; adenosylcobalamin biosynthesis. Functionally, part of the energy-coupling factor (ECF) transporter complex CbiMNOQ involved in cobalt import. This Nostoc sp. (strain PCC 7120 / SAG 25.82 / UTEX 2576) protein is Cobalt transport protein CbiM.